The sequence spans 251 residues: Ubiquinone/menaquinone biosynthesis C-methyltransferase UbiE (251 aa).

Residues Thr-74, Asp-95, and 123 to 124 (NA) contribute to the S-adenosyl-L-methionine site.

The protein belongs to the class I-like SAM-binding methyltransferase superfamily. MenG/UbiE family.

It catalyses the reaction a 2-demethylmenaquinol + S-adenosyl-L-methionine = a menaquinol + S-adenosyl-L-homocysteine + H(+). The enzyme catalyses a 2-methoxy-6-(all-trans-polyprenyl)benzene-1,4-diol + S-adenosyl-L-methionine = a 5-methoxy-2-methyl-3-(all-trans-polyprenyl)benzene-1,4-diol + S-adenosyl-L-homocysteine + H(+). It functions in the pathway quinol/quinone metabolism; menaquinone biosynthesis; menaquinol from 1,4-dihydroxy-2-naphthoate: step 2/2. The protein operates within cofactor biosynthesis; ubiquinone biosynthesis. Methyltransferase required for the conversion of demethylmenaquinol (DMKH2) to menaquinol (MKH2) and the conversion of 2-polyprenyl-6-methoxy-1,4-benzoquinol (DDMQH2) to 2-polyprenyl-3-methyl-6-methoxy-1,4-benzoquinol (DMQH2). This is Ubiquinone/menaquinone biosynthesis C-methyltransferase UbiE from Shewanella baltica (strain OS223).